The chain runs to 180 residues: Putative peroxiredoxin YkuU (180 aa).

Residues 4 to 165 (RMVGKQAPRF…TLRVLQALQT (162 aa)) form the Thioredoxin domain. Cysteine 52 (cysteine sulfenic acid (-SOH) intermediate) is an active-site residue.

The protein belongs to the peroxiredoxin family. AhpC/Prx1 subfamily. In terms of assembly, homodimer; disulfide-linked, upon oxidation.

The protein resides in the cytoplasm. It carries out the reaction a hydroperoxide + [protein]-dithiol = [protein]-disulfide + an alcohol + H2O. In terms of biological role, thiol-specific peroxidase that catalyzes the reduction of hydrogen peroxide and organic hydroperoxides to water and alcohols, respectively. Plays a role in cell protection against oxidative stress by detoxifying peroxides. This chain is Putative peroxiredoxin YkuU (ykuU), found in Bacillus subtilis (strain 168).